Consider the following 215-residue polypeptide: LexA repressor (215 aa).

The segment at residues 28–48 is a DNA-binding region (H-T-H motif); that stretch reads RAEIAAELGFSSPNAAEEHLR. Residues S133 and K170 each act as for autocatalytic cleavage activity in the active site.

Belongs to the peptidase S24 family. In terms of assembly, homodimer.

The enzyme catalyses Hydrolysis of Ala-|-Gly bond in repressor LexA.. Functionally, represses a number of genes involved in the response to DNA damage (SOS response), including recA and lexA. In the presence of single-stranded DNA, RecA interacts with LexA causing an autocatalytic cleavage which disrupts the DNA-binding part of LexA, leading to derepression of the SOS regulon and eventually DNA repair. The chain is LexA repressor from Burkholderia ambifaria (strain MC40-6).